The sequence spans 225 residues: uncharacterized protein (225 aa).

The segment at 32-82 (PKDKKKQNDTENKKKQPKDGENDKQKEQAETQPFEWIQQKDADDKKESNTA) is disordered. Basic and acidic residues-rich tracts occupy residues 37–60 (KQNDTENKKKQPKDGENDKQKEQA) and 69–79 (QQKDADDKKES).

This sequence belongs to the MG067/MG068/MG395 family.

This is an uncharacterized protein from Mycoplasma pneumoniae (strain ATCC 29342 / M129 / Subtype 1) (Mycoplasmoides pneumoniae).